The chain runs to 215 residues: Pyridoxine/pyridoxamine 5'-phosphate oxidase (215 aa).

Residues 9–12 (RRDY) and lysine 69 contribute to the substrate site. FMN-binding positions include 64–69 (RVLLLK), 79–80 (FS), lysine 86, and glutamine 108. Substrate is bound by residues tyrosine 126, arginine 130, and serine 134. FMN contacts are provided by residues 143–144 (QS) and tryptophan 188. 194-196 (RLH) contacts substrate. Arginine 198 lines the FMN pocket.

The protein belongs to the pyridoxamine 5'-phosphate oxidase family. In terms of assembly, homodimer. It depends on FMN as a cofactor.

It carries out the reaction pyridoxamine 5'-phosphate + O2 + H2O = pyridoxal 5'-phosphate + H2O2 + NH4(+). The catalysed reaction is pyridoxine 5'-phosphate + O2 = pyridoxal 5'-phosphate + H2O2. The protein operates within cofactor metabolism; pyridoxal 5'-phosphate salvage; pyridoxal 5'-phosphate from pyridoxamine 5'-phosphate: step 1/1. Its pathway is cofactor metabolism; pyridoxal 5'-phosphate salvage; pyridoxal 5'-phosphate from pyridoxine 5'-phosphate: step 1/1. In terms of biological role, catalyzes the oxidation of either pyridoxine 5'-phosphate (PNP) or pyridoxamine 5'-phosphate (PMP) into pyridoxal 5'-phosphate (PLP). This chain is Pyridoxine/pyridoxamine 5'-phosphate oxidase, found in Ectopseudomonas mendocina (strain ymp) (Pseudomonas mendocina).